The chain runs to 302 residues: MALNFWKSSHCQQWIFDKTEIWKQRAEDMKIYNEEEYNRLNIFWANFITAVATEGAHSQANVGCKLRQQVIATAIIYFKRFYLRQSFRDMCPFLVASTALFLACKVEEHTTLSVSSFLKNTAIVLPKRWGVTFETTSTKNGVVYDSEFILVEILDCCLVVHHASRPMFELLEDLKQFTQQSTIANQPIKDLEAIEAQCQKVANDSLRCDVSLIFPPHVIGLSSIMVAMELMGRGEELEAWLVEVDTDFEKVTDCVEQIYKMYTLWKSFDEKEEVKKLMAKLPKPNQQPPPQQQHQHQQGYHL.

One can recognise a Cyclin N-terminal domain in the interval 46–152; sequence NFITAVATEG…VYDSEFILVE (107 aa). A disordered region spans residues 281 to 302; that stretch reads LPKPNQQPPPQQQHQHQQGYHL. Low complexity predominate over residues 292 to 302; that stretch reads QQHQHQQGYHL.

The protein belongs to the cyclin family. Cyclin C subfamily. Component of the Mediator complex.

It is found in the nucleus. Functionally, component of the Mediator complex, a coactivator involved in regulated gene transcription of nearly all RNA polymerase II-dependent genes. Mediator functions as a bridge to convey information from gene-specific regulatory proteins to the basal RNA polymerase II transcription machinery. Mediator is recruited to promoters by direct interactions with regulatory proteins and serves as a scaffold for the assembly of a functional preinitiation complex with RNA polymerase II and the general transcription factors. Binds to and activates cyclin-dependent kinase cdk-8 that phosphorylates the CTD (C-terminal domain) of the large subunit of RNA polymerase II (RNAp II), which may inhibit the formation of a transcription initiation complex. This Caenorhabditis elegans protein is Cyclin-C (cic-1).